The chain runs to 538 residues: Calcium-dependent protein kinase 8 (538 aa).

The segment at 1–26 (MGNCCGTPATAEEGGKRRRRGKQKKA) is disordered. Residue G2 is the site of N-myristoyl glycine attachment. The segment covering 16 to 25 (KRRRRGKQKK) has biased composition (basic residues). Residues 64 to 322 (YELGGELGRG…AEQVLEHPWL (259 aa)) enclose the Protein kinase domain. ATP is bound by residues 70-78 (LGRGEFGIT) and K93. The active-site Proton acceptor is D188. Residues 328-358 (MPDIPLGDAVRARLQQFAAMNKLKKKALKVI) are autoinhibitory domain. EF-hand domains follow at residues 365-400 (EEAA…LGNQ), 401-436 (MPDS…VRKI), 437-472 (GNDE…EIDG), and 473-508 (NDED…GTDW). Ca(2+)-binding residues include D378, S380, N382, Q384, D389, D414, D416, N418, E425, D450, N452, S454, Y456, E461, D486, D488, D490, K492, and E497.

Belongs to the protein kinase superfamily. Ser/Thr protein kinase family. CDPK subfamily.

Its subcellular location is the membrane. It carries out the reaction L-seryl-[protein] + ATP = O-phospho-L-seryl-[protein] + ADP + H(+). The catalysed reaction is L-threonyl-[protein] + ATP = O-phospho-L-threonyl-[protein] + ADP + H(+). With respect to regulation, activated by calcium. Autophosphorylation may play an important role in the regulation of the kinase activity. Its function is as follows. May play a role in signal transduction pathways that involve calcium as a second messenger. The protein is Calcium-dependent protein kinase 8 of Oryza sativa subsp. japonica (Rice).